The primary structure comprises 341 residues: uncharacterized protein (341 aa).

4 WD repeats span residues 19–59 (SLGS…QVHT), 106–145 (GHTD…RCLG), 252–293 (PFSN…HHKG), and 303–341 (VSQS…ALTS).

The protein resides in the cytoplasm. It is found in the nucleus. This is an uncharacterized protein from Schizosaccharomyces pombe (strain 972 / ATCC 24843) (Fission yeast).